The following is a 79-amino-acid chain: MAKFASIVALLFAALVVFAAFEAPTVVEAKLCERSSGTWSGVCGNNNACKNQCIRLEGAQHGSCNYVFPAHKCICYFPC.

An N-terminal signal peptide occupies residues 1–29 (MAKFASIVALLFAALVVFAAFEAPTVVEA). Disulfide bonds link Cys-32-Cys-79, Cys-43-Cys-64, Cys-49-Cys-73, and Cys-53-Cys-75.

The protein belongs to the DEFL family.

The protein localises to the secreted. Possesses antifungal activity sensitive to inorganic cations. The polypeptide is Defensin-like protein 3 (AFP3) (Raphanus sativus (Radish)).